The primary structure comprises 118 residues: Myotrophin (118 aa).

3 ANK repeats span residues 1–30 (MSDK…DVNR), 34–65 (GGRK…NAPD), and 67–98 (HNIT…TVKG).

This sequence belongs to the myotrophin family.

It localises to the cytoplasm. The protein localises to the nucleus. The protein resides in the perinuclear region. Its function is as follows. Regulates NF-kappa-B transcription factor activity. Promotes growth of cardiomyocytes, but not cardiomyocyte proliferation. Promotes cardiac muscle hypertrophy. Plays a role in the regulation of the growth of actin filaments. Inhibits the activity of the F-actin-capping protein complex. This is Myotrophin (MTPN) from Gallus gallus (Chicken).